We begin with the raw amino-acid sequence, 193 residues long: PBAN-type neuropeptides (193 aa).

The first 19 residues, 1 to 19 (MYGAVLPGLFFIFISCVVA), serve as a signal peptide directing secretion. Position 46 is an isoleucine amide (I46). Leucine amide occurs at positions 102 and 122. Residues 124 to 158 (RRLADDTPATPADQEMYRPDPEQIDSRTKYFSPRL) form a disordered region. Residues 138–151 (EMYRPDPEQIDSRT) are compositionally biased toward basic and acidic residues. L158 and L168 each carry leucine amide. The propeptide occupies 186–193 (STNKTQST).

The protein belongs to the pyrokinin family. As to expression, expressed in the mandibular, maxillary and labial neuromeres of the male and female brain-subesophageal ganglions, in the corpora cardiaca and all around the corpora allata, and at a lower level in the brain near the calyx and pedunculus of the mushroom body (at protein level). Expressed in larvae and adult of both sexes (at protein level). Expressed in corpora cardiaca (CC), corpora allata (CA) and gnathal ganglion (GNG) (at protein level). Expression in CC and CA detected in most animals, in GNG in some (at protein level). In terms of tissue distribution, expression not detected in CC, CA, AL or GNG (at protein level). As to expression, expressed in corpora cardiaca (CC), corpora allata (CA), antennal lobe (AL) and gnathal ganglion (GNG) (at protein level). Expression in CC, CA and GNG detected in most animals, expression in AL detected in few (at protein level). Expressed in corpora cardiaca (CC), corpora allata (CA), antennal lobe (AL) and gnathal ganglion (GNG) (at protein level). Expression in CC, CA and GNG detected in all animals, expression in AL detected in some (at protein level). In terms of tissue distribution, expressed in corpora cardiaca (CC), corpora allata (CA), antennal lobe (AL) and gnathal ganglion (GNG) (at protein level). Expression in CC, CA and GNG detected in most animals, expression in AL detected in some animals (at protein level).

The protein localises to the secreted. In terms of biological role, a hormone that controls sex pheromone production in female moths and pheromone responsiveness in male. The sequence is that of PBAN-type neuropeptides from Agrotis ipsilon (Black cutworm moth).